A 534-amino-acid polypeptide reads, in one-letter code: Arginine transporter 1 (534 aa).

A run of 6 helical transmembrane segments spans residues 35-55, 99-119, 126-146, 154-174, 182-202, and 216-236; these read YVLL…YFGW, SLFT…GYLL, AVAL…AFSG, PAFV…LLIV, ALIM…PLVL, and VCIG…FFFI. An N-linked (GlcNAc...) asparagine glycan is attached at N246. Residues 261–302 form a disordered region; it reads TAQSSPKAVDSPPCDEGASSRGRLAVSHNTERTAPDDEQEKD. A compositionally biased stretch (basic and acidic residues) spans 289–302; that stretch reads NTERTAPDDEQEKD. Helical transmembrane passes span 329–349, 365–385, 388–408, 419–439, 451–471, and 483–503; these read AFTF…WVMA, YTLE…GVVI, IGIM…YVCV, FSVI…YVFV, LIGV…VLYG, and RPVV…LLAM.

Belongs to the SLC43A transporter (TC 2.A.1.44) family.

The protein resides in the cell membrane. It catalyses the reaction L-arginine(in) = L-arginine(out). Its function is as follows. Selective L-arginine transporter that is essential for parasite survival and virulence. Does not require other inorganic ions such as sodium, chloride, potassium or calcium. The chain is Arginine transporter 1 from Toxoplasma gondii (strain ATCC 50611 / Me49).